A 616-amino-acid polypeptide reads, in one-letter code: Dihydroxy-acid dehydratase (616 aa).

Asp81 provides a ligand contact to Mg(2+). Cys122 contributes to the [2Fe-2S] cluster binding site. Asp123 and Lys124 together coordinate Mg(2+). Lys124 carries the post-translational modification N6-carboxylysine. Residue Cys195 participates in [2Fe-2S] cluster binding. Residue Glu491 coordinates Mg(2+). Ser517 serves as the catalytic Proton acceptor.

Belongs to the IlvD/Edd family. As to quaternary structure, homodimer. It depends on [2Fe-2S] cluster as a cofactor. The cofactor is Mg(2+).

It catalyses the reaction (2R)-2,3-dihydroxy-3-methylbutanoate = 3-methyl-2-oxobutanoate + H2O. The catalysed reaction is (2R,3R)-2,3-dihydroxy-3-methylpentanoate = (S)-3-methyl-2-oxopentanoate + H2O. Its pathway is amino-acid biosynthesis; L-isoleucine biosynthesis; L-isoleucine from 2-oxobutanoate: step 3/4. The protein operates within amino-acid biosynthesis; L-valine biosynthesis; L-valine from pyruvate: step 3/4. Functionally, functions in the biosynthesis of branched-chain amino acids. Catalyzes the dehydration of (2R,3R)-2,3-dihydroxy-3-methylpentanoate (2,3-dihydroxy-3-methylvalerate) into 2-oxo-3-methylpentanoate (2-oxo-3-methylvalerate) and of (2R)-2,3-dihydroxy-3-methylbutanoate (2,3-dihydroxyisovalerate) into 2-oxo-3-methylbutanoate (2-oxoisovalerate), the penultimate precursor to L-isoleucine and L-valine, respectively. The protein is Dihydroxy-acid dehydratase of Salmonella agona (strain SL483).